We begin with the raw amino-acid sequence, 184 residues long: dTTP/UTP pyrophosphatase (184 aa).

The active-site Proton acceptor is the Asp67.

This sequence belongs to the Maf family. YhdE subfamily. It depends on a divalent metal cation as a cofactor.

It is found in the cytoplasm. The catalysed reaction is dTTP + H2O = dTMP + diphosphate + H(+). It carries out the reaction UTP + H2O = UMP + diphosphate + H(+). In terms of biological role, nucleoside triphosphate pyrophosphatase that hydrolyzes dTTP and UTP. May have a dual role in cell division arrest and in preventing the incorporation of modified nucleotides into cellular nucleic acids. This is dTTP/UTP pyrophosphatase from Elusimicrobium minutum (strain Pei191).